The primary structure comprises 245 residues: MRRVAAIVEYDGSNFFGYQGQPDVRTVQGVIEDALERIFKQRIYTQAAGRTDAGVHANGQLIAFNCPNDRMTTEDIKNAMNANLPDDVYVKKVFEVPKNFHPRFDVKKRIYHYFIHTSREKNVFLRKYAWWFPYELDLEAMRKAAKYLEGTHDFTSFKTGSDERDPVRTIYRIRILSLGKDMILIRVEGRSFLRRMVRNIVAALVKVGLRQWEPEKLKEVLEARDRSAAAGTAPAHGLYFYKVLF.

The active-site Nucleophile is the Asp-52. Tyr-111 contributes to the substrate binding site.

This sequence belongs to the tRNA pseudouridine synthase TruA family. Homodimer.

The enzyme catalyses uridine(38/39/40) in tRNA = pseudouridine(38/39/40) in tRNA. Formation of pseudouridine at positions 38, 39 and 40 in the anticodon stem and loop of transfer RNAs. This is tRNA pseudouridine synthase A from Thermotoga neapolitana (strain ATCC 49049 / DSM 4359 / NBRC 107923 / NS-E).